A 150-amino-acid polypeptide reads, in one-letter code: Allograft inflammatory factor 1-like (150 aa).

S2 is subject to N-acetylserine. S2 is modified (phosphoserine). In terms of domain architecture, EF-hand 1 spans E47–P82. Ca(2+)-binding residues include D60, N62, E64, and E66. The EF-hand 2; degenerate domain maps to K83–S117. Residues K129–P150 form a disordered region. S134 bears the Phosphoserine mark.

As to quaternary structure, homodimer (Potential). Monomer.

It localises to the cytoplasm. Its subcellular location is the cytoskeleton. The protein localises to the cell projection. It is found in the ruffle membrane. Actin-binding protein that promotes actin bundling. May neither bind calcium nor depend on calcium for function. The sequence is that of Allograft inflammatory factor 1-like (AIF1L) from Homo sapiens (Human).